The chain runs to 281 residues: Elongation factor 1-delta (281 aa).

A2 carries the post-translational modification N-acetylalanine. Position 17 is an N6-acetyllysine (K17). Residues S37, E40, S44, and S60 each carry the phosphoserine modification. T73 is subject to Phosphothreonine. The tract at residues 80–115 (LVVRIASLEVENQSLRGVVQELQQAISKLEARLNVL) is leucine-zipper. A phosphoserine mark is found at S86, N91, L94, and S106. K107 carries the N6-acetyllysine modification. At K117 the chain carries N6-acetyllysine; alternate. K117 carries the post-translational modification N6-succinyllysine; alternate. The disordered stretch occupies residues 118 to 172 (SSPGHRATAPQTQHVSPMRQVEPPAKKPATPAEDDEDDDIDLFGSDNEEEDKEAA). S119 is modified (phosphoserine). The residue at position 129 (T129) is a Phosphothreonine. S133 is modified (phosphoserine). The residue at position 147 (T147) is a Phosphothreonine. Residues 149–169 (AEDDEDDDIDLFGSDNEEEDK) show a composition bias toward acidic residues. The residue at position 162 (S162) is a Phosphoserine; by CK2. Residues 173–281 (QLREERLRQY…SVDIAAFNKI (109 aa)) form a catalytic (GEF) region.

It belongs to the EF-1-beta/EF-1-delta family. EF-1 is composed of 4 subunits: alpha, beta, delta isoform 1, and gamma. Isoform 2 interacts with HSF1 and NFE2L2. In terms of tissue distribution, isoform 2 is specifically expressed in brain, cerebellum and testis.

It localises to the nucleus. Its function is as follows. EF-1-beta and EF-1-delta stimulate the exchange of GDP bound to EF-1-alpha to GTP, regenerating EF-1-alpha for another round of transfer of aminoacyl-tRNAs to the ribosome. In terms of biological role, regulates induction of heat-shock-responsive genes through association with heat shock transcription factors and direct DNA-binding at heat shock promoter elements (HSE). In Homo sapiens (Human), this protein is Elongation factor 1-delta (EEF1D).